A 644-amino-acid chain; its full sequence is Zinc finger protein 568 (644 aa).

The KRAB domain maps to 48–119; it reads VTFKDVAVDL…EEEMFGRHCP (72 aa). 15 C2H2-type zinc fingers span residues 222 to 244, 250 to 272, 278 to 300, 306 to 328, 334 to 356, 362 to 384, 390 to 412, 418 to 440, 446 to 468, 474 to 496, 502 to 524, 530 to 552, 558 to 580, 586 to 608, and 614 to 636; these read FKCN…ERIH, YECK…QKIH, YKCN…HRIH, YACK…ERIH, YECK…EKIH, YACN…MRSH, YKCN…MRSH, YVCS…MRNH, YECS…QRIH, YACT…EKIH, YHCN…EKIH, FKCN…VRSH, YECN…MRSH, and FECN…KRGH.

This sequence belongs to the krueppel C2H2-type zinc-finger protein family. As to quaternary structure, interacts with TRIM28.

It localises to the nucleus. In terms of biological role, has transcriptional repression activity, partially through the recruitment of the corepressor TRIM28 but also has repression activity independently of this interaction. Essential during embryonic development, where it acts as a direct repressor of a placental-specific transcript of IGF2 in early development and regulates convergent extension movements required for axis elongation and tissue morphogenesis in all germ layers. Also important for normal morphogenesis of extraembryonic tissues including the yolk sac, extraembryonic mesoderm and placenta. May enhance proliferation or maintenance of neural stem cells. The chain is Zinc finger protein 568 (ZNF568) from Homo sapiens (Human).